Consider the following 427-residue polypeptide: Glutamate-1-semialdehyde 2,1-aminomutase (427 aa).

Lys-265 carries the post-translational modification N6-(pyridoxal phosphate)lysine.

Belongs to the class-III pyridoxal-phosphate-dependent aminotransferase family. HemL subfamily. In terms of assembly, homodimer. The cofactor is pyridoxal 5'-phosphate.

It is found in the cytoplasm. It carries out the reaction (S)-4-amino-5-oxopentanoate = 5-aminolevulinate. The protein operates within porphyrin-containing compound metabolism; protoporphyrin-IX biosynthesis; 5-aminolevulinate from L-glutamyl-tRNA(Glu): step 2/2. In Mannheimia succiniciproducens (strain KCTC 0769BP / MBEL55E), this protein is Glutamate-1-semialdehyde 2,1-aminomutase.